A 906-amino-acid chain; its full sequence is MLQSLFKKVFGSRNERLVKQYLQKVKAINALEPAMEQLSDAELAGKTADFKARIEQGTSLDTLLPEAFAVVREAARRVLGLRHYDVQMVGGMVLHDGKIAEMRTGEGKTLMATLPAYLNALAGKGVHVVTVNDYLARRDAEWMGRVYGFLGLTTGVNLSHMPHAEKQAAYAADITYGTNNEYGFDYLRDNMVFEVGEKVQRPLAFGVIDEVDSILIDEARTPLIISGQSEENTALYQQVNLVPPRLTRQKDEESEGDYSVDEKSRQVLLSEAGHEKVEEILTEMGLLQPGGSLYDASNIMLMHHVYAALRAHALFFKDQHYVVQNGEVVIVDEFTGRLMSGRRWSEGLHQAVEAKEGVAIQKENQTLASITFQNFFRMYEKLSGMTGTADTEAFEFQSIYGLETVVIPTHRPMIRKDEHDQVYRTGRERDQAVINDVRACHERGQPVLVGTTSIEANEKLSAELKKAGLPHNVLNAKQHASEAEVIAQAGLPGAVTIATNMAGRGTDIVLGGSIQKEVDAIRNDAALADGEKDARITALKADWQTRHDAVLAAGGLHIIGTERHESRRVDNQLRGRSGRQGDPGSSRFFLSLEDPLLRIFASDRVAAIMNRLKMPEGEAIEHPWVTRAIENAQRKVEQRNFDIRKQLLEYDDVSNDQRKVIYEQRNELLASVEIGDTIRAMRYDVLGETIDQHIAPGSMDEQWDVAGLEKTLAAQFTLELPLRQWLDEDKTLNEEGLRKKILAAADAAYAEKEALVGAEGLRRFERAVMLQSLDTHWREHLSALDHLRQGIHLRGYAQKQPKQEYKREAFELFSAMLAAIKAEVTQITTTVQVRAPEDVQAVELHEEPSNVQYEHAGYDEGADFAAAESAEAAPSGPVHVGPKVGRNDPCPCGSGKKYKQCHGKLA.

ATP is bound by residues Q87, 105–109 (GEGKT), and D507. Zn(2+) is bound by residues C890, C892, C901, and H902.

This sequence belongs to the SecA family. Monomer and homodimer. Part of the essential Sec protein translocation apparatus which comprises SecA, SecYEG and auxiliary proteins SecDF-YajC and YidC. Zn(2+) serves as cofactor.

The protein resides in the cell inner membrane. It is found in the cytoplasm. It carries out the reaction ATP + H2O + cellular proteinSide 1 = ADP + phosphate + cellular proteinSide 2.. Part of the Sec protein translocase complex. Interacts with the SecYEG preprotein conducting channel. Has a central role in coupling the hydrolysis of ATP to the transfer of proteins into and across the cell membrane, serving both as a receptor for the preprotein-SecB complex and as an ATP-driven molecular motor driving the stepwise translocation of polypeptide chains across the membrane. The polypeptide is Protein translocase subunit SecA (Thiobacillus denitrificans (strain ATCC 25259 / T1)).